Reading from the N-terminus, the 227-residue chain is UPF0758 protein CPF_2399 (227 aa).

An MPN domain is found at 105–227; sequence KISKPSDVAK…FISLKEKDIL (123 aa). Positions 176, 178, and 189 each coordinate Zn(2+). The JAMM motif signature appears at 176-189; it reads HNHPSGDPTPSRDD.

The protein belongs to the UPF0758 family.

The sequence is that of UPF0758 protein CPF_2399 from Clostridium perfringens (strain ATCC 13124 / DSM 756 / JCM 1290 / NCIMB 6125 / NCTC 8237 / Type A).